We begin with the raw amino-acid sequence, 89 residues long: Small ribosomal subunit protein bS20 (89 aa).

Positions 1-27 are disordered; that stretch reads MANIKSAKKDSIISEERRKKNASQRSK. Basic and acidic residues predominate over residues 7–18; it reads AKKDSIISEERR.

Belongs to the bacterial ribosomal protein bS20 family.

Its function is as follows. Binds directly to 16S ribosomal RNA. The chain is Small ribosomal subunit protein bS20 from Buchnera aphidicola subsp. Schizaphis graminum (strain Sg).